We begin with the raw amino-acid sequence, 150 residues long: Cyclin-dependent kinases regulatory subunit (150 aa).

Positions 115 to 137 (AAAQQQQQQQQQQQQQQQQHQTQ) are enriched in low complexity. A disordered region spans residues 115-150 (AAAQQQQQQQQQQQQQQQQHQTQSISNDMQVPPQIS).

This sequence belongs to the CKS family. In terms of assembly, forms a stable but non-covalent complex with the CDC28 protein and with a cyclin.

Functionally, binds to the catalytic subunit of the cyclin dependent kinase (CDC28) and is essential for its biological function. This is Cyclin-dependent kinases regulatory subunit from Saccharomyces cerevisiae (strain ATCC 204508 / S288c) (Baker's yeast).